The sequence spans 123 residues: Small ribosomal subunit protein uS12 (123 aa).

At Asp89 the chain carries 3-methylthioaspartic acid. A disordered region spans residues 101–123 (TLDTQGVKDRRQRRSKYGAKRPK). A compositionally biased stretch (basic residues) spans 110 to 123 (RRQRRSKYGAKRPK).

Belongs to the universal ribosomal protein uS12 family. As to quaternary structure, part of the 30S ribosomal subunit. Contacts proteins S8 and S17. May interact with IF1 in the 30S initiation complex.

In terms of biological role, with S4 and S5 plays an important role in translational accuracy. Interacts with and stabilizes bases of the 16S rRNA that are involved in tRNA selection in the A site and with the mRNA backbone. Located at the interface of the 30S and 50S subunits, it traverses the body of the 30S subunit contacting proteins on the other side and probably holding the rRNA structure together. The combined cluster of proteins S8, S12 and S17 appears to hold together the shoulder and platform of the 30S subunit. The chain is Small ribosomal subunit protein uS12 from Paramagnetospirillum magneticum (strain ATCC 700264 / AMB-1) (Magnetospirillum magneticum).